Consider the following 560-residue polypeptide: Protein SINE1 (560 aa).

The residue at position 2 (Gly2) is an N-acetylglycine. The tract at residues 7–287 (PILRQELANL…VRGAAYEAMM (281 aa)) is ARMADILLO-type fold. The KASH domain maps to 517–560 (KKKKKKMSYAKLVIAISFVVVALFATVILMVNQDDDVGYYTVPT). A helical membrane pass occupies residues 528–548 (LVIAISFVVVALFATVILMVN). The short motif at 557–560 (TVPT) is the Required for nuclear localization element.

In terms of assembly, interacts with SUN1 and SUN2. Binds to F-actin. As to expression, preferentially expressed in guards cells, but also detected in root cells.

It localises to the nucleus membrane. Functionally, plays a role in nucleus positioning in guard cells. In Arabidopsis thaliana (Mouse-ear cress), this protein is Protein SINE1.